The chain runs to 88 residues: Small ribosomal subunit protein bS20 (88 aa).

Positions 1 to 17 (MANIKSNEKRLRQDIKR) are enriched in basic and acidic residues. The interval 1–25 (MANIKSNEKRLRQDIKRNLNNKGQK) is disordered.

Belongs to the bacterial ribosomal protein bS20 family.

Functionally, binds directly to 16S ribosomal RNA. In Mycoplasma genitalium (strain ATCC 33530 / DSM 19775 / NCTC 10195 / G37) (Mycoplasmoides genitalium), this protein is Small ribosomal subunit protein bS20.